A 327-amino-acid polypeptide reads, in one-letter code: Phenylalanine--tRNA ligase alpha subunit (327 aa).

Glu-252 contacts Mg(2+).

Belongs to the class-II aminoacyl-tRNA synthetase family. Phe-tRNA synthetase alpha subunit type 1 subfamily. Tetramer of two alpha and two beta subunits. It depends on Mg(2+) as a cofactor.

It is found in the cytoplasm. It carries out the reaction tRNA(Phe) + L-phenylalanine + ATP = L-phenylalanyl-tRNA(Phe) + AMP + diphosphate + H(+). The sequence is that of Phenylalanine--tRNA ligase alpha subunit from Shewanella baltica (strain OS185).